A 210-amino-acid polypeptide reads, in one-letter code: Nucleoside triphosphate pyrophosphatase (210 aa).

Aspartate 80 (proton acceptor) is an active-site residue.

It belongs to the Maf family. A divalent metal cation serves as cofactor.

It localises to the cytoplasm. It catalyses the reaction a ribonucleoside 5'-triphosphate + H2O = a ribonucleoside 5'-phosphate + diphosphate + H(+). It carries out the reaction a 2'-deoxyribonucleoside 5'-triphosphate + H2O = a 2'-deoxyribonucleoside 5'-phosphate + diphosphate + H(+). Nucleoside triphosphate pyrophosphatase. May have a dual role in cell division arrest and in preventing the incorporation of modified nucleotides into cellular nucleic acids. This is Nucleoside triphosphate pyrophosphatase from Mycobacterium sp. (strain JLS).